We begin with the raw amino-acid sequence, 232 residues long: Large ribosomal subunit protein uL1 (232 aa).

This sequence belongs to the universal ribosomal protein uL1 family. Part of the 50S ribosomal subunit.

Binds directly to 23S rRNA. The L1 stalk is quite mobile in the ribosome, and is involved in E site tRNA release. In terms of biological role, protein L1 is also a translational repressor protein, it controls the translation of the L11 operon by binding to its mRNA. This Rhizobium meliloti (strain 1021) (Ensifer meliloti) protein is Large ribosomal subunit protein uL1.